A 146-amino-acid chain; its full sequence is 3-dehydroquinate dehydratase (146 aa).

Y23 functions as the Proton acceptor in the catalytic mechanism. Positions 75, 81, and 88 each coordinate substrate. Residue H101 is the Proton donor of the active site. Substrate-binding positions include 102 to 103 (LS) and R112.

Belongs to the type-II 3-dehydroquinase family. Homododecamer.

It carries out the reaction 3-dehydroquinate = 3-dehydroshikimate + H2O. The protein operates within metabolic intermediate biosynthesis; chorismate biosynthesis; chorismate from D-erythrose 4-phosphate and phosphoenolpyruvate: step 3/7. Catalyzes a trans-dehydration via an enolate intermediate. The polypeptide is 3-dehydroquinate dehydratase (Saccharophagus degradans (strain 2-40 / ATCC 43961 / DSM 17024)).